The primary structure comprises 213 residues: Outer-membrane lipoprotein carrier protein (213 aa).

A signal peptide spans Met-1–Ala-23.

Belongs to the LolA family. Monomer.

It localises to the periplasm. Its function is as follows. Participates in the translocation of lipoproteins from the inner membrane to the outer membrane. Only forms a complex with a lipoprotein if the residue after the N-terminal Cys is not an aspartate (The Asp acts as a targeting signal to indicate that the lipoprotein should stay in the inner membrane). This chain is Outer-membrane lipoprotein carrier protein, found in Actinobacillus pleuropneumoniae serotype 3 (strain JL03).